The primary structure comprises 496 residues: Cytochrome P450 monooxygenase claT (496 aa).

A helical membrane pass occupies residues Leu-2–Val-22. Cys-423 serves as a coordination point for heme.

This sequence belongs to the cytochrome P450 family. It depends on heme as a cofactor.

It is found in the membrane. It carries out the reaction wigandol + 4 reduced [NADPH--hemoprotein reductase] + 4 O2 = arnebinol A + 4 oxidized [NADPH--hemoprotein reductase] + 6 H2O + 4 H(+). It catalyses the reaction arnebinol A + reduced [NADPH--hemoprotein reductase] + O2 = clavilactone A + oxidized [NADPH--hemoprotein reductase] + H2O + H(+). The enzyme catalyses (2E)-geranylhydroquinone + reduced [NADPH--hemoprotein reductase] + O2 = isoalliodorol + oxidized [NADPH--hemoprotein reductase] + H2O + H(+). It functions in the pathway secondary metabolite biosynthesis; terpenoid biosynthesis. In terms of biological role, cytochrome P450 monooxygenase; part of the gene cluster that mediates the biosynthesis of clavilactone A, a meroterpenoid that features a unique benzo-fused ten-membered carbocyclic ring unit with an alpha,beta-epoxy-gamma-lactone moiety, forming an intriguing 10/5/3 tricyclic nested skeleton. ClaR, ClaS and ClaT are sufficient to produce clavilactone A. Within the pathway, claT acts as a multifunctional cytochrome P450 monooxygenase that catalyzes a ten-electron oxidation to accomplish the biosynthesis of the 10/5/3 tricyclic nested skeleton in clavilactones. The biosynthesis begins with the prenyltransferase claS that transfers geranyl pyrophosphate (GPP) to hydroquinone to produces geranylhydroquinone. The cytochrome P450 monooxygenase claR then catalyzes the diradical coupling reaction between the intramolecular hydroquinone and allyl moieties to form the benzo-fused ten-membered carbocyclic ring unit of wigantol. Finally the cytochrome P450 monooxygenase claT exquisitely and stereoselectively assembles the alpha,beta-epoxy-gamma-lactone moiety, producing clavilactone A via arnebinol A. This Ampulloclitocybe clavipes (Club foot) protein is Cytochrome P450 monooxygenase claT.